A 407-amino-acid polypeptide reads, in one-letter code: Arginine biosynthesis bifunctional protein ArgJ (407 aa).

Residues T157, K183, T194, E280, N402, and T407 each contribute to the substrate site. T194 acts as the Nucleophile in catalysis.

It belongs to the ArgJ family. As to quaternary structure, heterotetramer of two alpha and two beta chains.

The protein localises to the cytoplasm. It catalyses the reaction N(2)-acetyl-L-ornithine + L-glutamate = N-acetyl-L-glutamate + L-ornithine. It carries out the reaction L-glutamate + acetyl-CoA = N-acetyl-L-glutamate + CoA + H(+). Its pathway is amino-acid biosynthesis; L-arginine biosynthesis; L-ornithine and N-acetyl-L-glutamate from L-glutamate and N(2)-acetyl-L-ornithine (cyclic): step 1/1. It participates in amino-acid biosynthesis; L-arginine biosynthesis; N(2)-acetyl-L-ornithine from L-glutamate: step 1/4. Its function is as follows. Catalyzes two activities which are involved in the cyclic version of arginine biosynthesis: the synthesis of N-acetylglutamate from glutamate and acetyl-CoA as the acetyl donor, and of ornithine by transacetylation between N(2)-acetylornithine and glutamate. This is Arginine biosynthesis bifunctional protein ArgJ from Bacillus cereus (strain ATCC 10987 / NRS 248).